Reading from the N-terminus, the 1149-residue chain is Polyprotein nsP1234 (1149 aa).

The Macro domain maps to 1 to 160 (APSYRVRRTD…KIQEAIDRRT (160 aa)). ADP-D-ribose-binding residues include Asp-10, Asn-24, Gly-32, Gly-112, Val-113, and Phe-114. Positions 262, 264, 287, and 305 each coordinate Zn(2+). Residue Thr-344 is modified to Phosphothreonine; by host. Short sequence motifs (FGDF; binding to host G3BP1) lie at residues 512-515 (FGDF) and 523-526 (FGDI). The RdRp catalytic domain occupies 903-1018 (DAVLETDIAS…HGVRSDPLMA (116 aa)).

As to quaternary structure, interacts with mRNA-capping enzyme nsP1. Interacts with host DDX1. RNA-directed Interacts with host DDX3. Interacts (via C-terminus) with host G3BP1; this interaction inhibits the formation of host stress granules on viral mRNAs and the nsp3-G3BP1 complexes bind viral RNAs and probably orchestrate the assembly of viral replication complexes. Interacts (via C-terminus) with host G3BP2; this interaction inhibits the formation of host stress granules on viral mRNAs and the nsp3-G3BP2 complexes bind viral RNAs and probably orchestrate the assembly of viral replication complexes. In terms of assembly, interacts with itself. Interacts with mRNA-capping enzyme nsP1. Interacts with protease nsP2. Interacts with itself. The cofactor is Mg(2+). Mn(2+) serves as cofactor. Post-translationally, polyprotein P1234: Specific enzymatic cleavages in vivo yield mature proteins. The processing of the polyprotein is temporally regulated. In early stages (1.7 hpi), P1234 is first cleaved in trans through its nsP2 protease activity, releasing P123' and nsP4, which associate to form the early replication complex. At the same time, P1234 is also cut at the nsP1/nsP2 site early in infection but with lower efficiency. After replication of the viral minus-strand RNAs (4 hpi), the polyproteins are cut at the nsP1/nsP2 and nsP2/nsP3 sites very efficiently, preventing accumulation of P123' and P1234 and allowing the formation of the late replication complex. NsP3'/nsP4 site is not cleaved anymore and P34 is produced rather than nsP4. Specific enzymatic cleavages in vivo yield mature proteins. The processing of the polyprotein is temporally regulated. In early stages (1.7 hpi), P123 is cleaved at the nsP1/nsP2 site with low efficiency. After replication of the viral minus-strand RNAs (4 hpi), the polyproteins are cut at the nsP1/nsP2 and nsP2/nsP3 sites very efficiently, preventing accumulation of P123 and allowing the formation of the late replication complex. In terms of processing, phosphorylated by host on serines and threonines. Post-translationally, ubiquitinated; targets the protein for rapid degradation via the ubiquitin system. Nsp4 is present in extremely low quantities due to low frequency of translation through the amber stop-codon and the degradation by the ubiquitin pathway.

Its subcellular location is the host cytoplasmic vesicle membrane. It catalyses the reaction RNA(n) + a ribonucleoside 5'-triphosphate = RNA(n+1) + diphosphate. The catalysed reaction is 4-O-(ADP-D-ribosyl)-L-aspartyl-[protein] + H2O = L-aspartyl-[protein] + ADP-D-ribose + H(+). It carries out the reaction 5-O-(ADP-D-ribosyl)-L-glutamyl-[protein] + H2O = L-glutamyl-[protein] + ADP-D-ribose + H(+). The enzyme catalyses RNA(n) + ATP = RNA(n)-3'-adenine ribonucleotide + diphosphate. It catalyses the reaction ADP-alpha-D-ribose 1''-phosphate + H2O = ADP-D-ribose + phosphate. In terms of biological role, polyprotein P1234: Inactive precursor of the viral replicase, which is activated by cleavages carried out by the viral protease nsP2. Its function is as follows. The early replication complex formed by the polyprotein P123 and nsP4 synthesizes minus-strand RNAs. As soon P123 is cleaved into mature proteins, the plus-strand RNAs synthesis begins. Functionally, the early replication complex formed by the polyprotein P123' and nsP4 synthesizes minus-strand RNAs. Polyprotein P123' is a short-lived polyprotein that accumulates during early stage of infection. As soon P123' is cleaved into mature proteins, the plus-strand RNAs synthesis begins. Seems to be essential for minus-strand RNAs and subgenomic 26S mRNAs synthesis. Displays mono-ADP-ribosylhydrolase activity. ADP-ribosylation is a post-translational modification that controls various processes of the host cell and the virus probably needs to revert it for optimal viral replication. Binds proteins of FXR family and sequesters them into the viral RNA replication complexes thereby inhibiting the formation of host stress granules on viral mRNAs. The nsp3'-FXR complexes bind viral RNAs and probably orchestrate the assembly of viral replication complexes, thanks to the ability of FXR family members to self-assemble and bind DNA. In terms of biological role, seems to be essential for minus-strand RNAs and subgenomic 26S mRNAs synthesis. Displays mono-ADP-ribosylhydrolase activity. ADP-ribosylation is a post-translational modification that controls various processes of the host cell and the virus probably needs to revert it for optimal viral replication. Binds proteins of G3BP family and sequesters them into the viral RNA replication complexes thereby inhibiting the formation of host stress granules on viral mRNAs. The nsp3-G3BP complexes bind viral RNAs and probably orchestrate the assembly of viral replication complexes, thanks to the ability of G3BP family members to self-assemble and bind DNA. Its function is as follows. RNA dependent RNA polymerase. Replicates genomic and antigenomic RNA by recognizing replications specific signals. The early replication complex formed by the polyprotein P123 and nsP4 synthesizes minus-strand RNAs. The late replication complex composed of fully processed nsP1-nsP4 is responsible for the production of genomic and subgenomic plus-strand RNAs. The polypeptide is Polyprotein nsP1234 (Ross river virus (strain T48) (RRV)).